The following is a 193-amino-acid chain: Ion-translocating oxidoreductase complex subunit A (193 aa).

The next 6 helical transmembrane spans lie at 5–25, 39–59, 63–83, 102–122, 134–154, and 171–191; these read LLLF…FLGL, MGMG…AWLI, ILIP…VIAV, LLGI…VALL, ALYG…FTAI, and AIAL…SGLV.

Belongs to the NqrDE/RnfAE family. In terms of assembly, the complex is composed of six subunits: RsxA, RsxB, RsxC, RsxD, RsxE and RsxG.

The protein localises to the cell inner membrane. Its function is as follows. Part of a membrane-bound complex that couples electron transfer with translocation of ions across the membrane. Required to maintain the reduced state of SoxR. This is Ion-translocating oxidoreductase complex subunit A from Shigella boydii serotype 4 (strain Sb227).